The chain runs to 408 residues: 2-acyl-4-prenylphloroglucinol 6-prenyltransferase, chloroplastic (408 aa).

Residues 1-46 (MELSSACNLSLKPNYYYYPTSLFPSNNSYNNLKASSYYQTQRPIKC) constitute a chloroplast transit peptide. The next 9 helical transmembrane spans lie at 119 to 139 (PIPFVAVSIICTSLFGAELLK), 146 to 166 (WQLMFDAFQGLVVILLYHIYI), 193 to 213 (SVKSAWFLTIFSAVASLLLMI), 217 to 237 (CGLFLTCMYCCYLVIGAMYSV), 257 to 277 (IGIGINFLINYASRATLGLPF), 281 to 301 (PPFTFIIGFVSTLSIILSILK), 326 to 346 (IVLVGSGFFLLNYVAAIGVAI), 355 to 375 (YIMIPAHAIFASALIFKTWLL), and 388 to 408 (YYHFLWFLMIAEYILYPFIST).

The protein belongs to the UbiA prenyltransferase family. In terms of assembly, homo- and heteromer. Interacts with PT1L, forming a functional metabolon. Mg(2+) serves as cofactor. As to expression, expressed in trichomes.

The protein resides in the plastid. Its subcellular location is the chloroplast membrane. It carries out the reaction a 2-acyl-4-prenylphloroglucinol + dimethylallyl diphosphate = a 2-acyl-4,6-diprenylphloroglucinol + diphosphate. It catalyses the reaction a 2-acyl-4,6-diprenylphloroglucinol + dimethylallyl diphosphate = a 2-acyl-4,6,6-triprenylphloroglucinol + diphosphate. Its pathway is secondary metabolite biosynthesis. Involved in the biosynthesis of prenylated phenolics natural products which contribute to the bitter taste of beer and display broad biological activities. Catalyzes the two last prenylation steps in the beta-bitter acid pathway. Uses dimethylallyl diphosphate (DMAPP) as the prenyl donor. This is 2-acyl-4-prenylphloroglucinol 6-prenyltransferase, chloroplastic from Humulus lupulus (European hop).